The primary structure comprises 358 residues: Peptide chain release factor 1 (358 aa).

Gln-235 is modified (N5-methylglutamine).

It belongs to the prokaryotic/mitochondrial release factor family. Post-translationally, methylated by PrmC. Methylation increases the termination efficiency of RF1.

The protein resides in the cytoplasm. Functionally, peptide chain release factor 1 directs the termination of translation in response to the peptide chain termination codons UAG and UAA. The chain is Peptide chain release factor 1 from Brachyspira hyodysenteriae (strain ATCC 49526 / WA1).